The following is a 429-amino-acid chain: Glucose-1-phosphate adenylyltransferase (429 aa).

Residues Gly162, 177–178 (EK), and Ser209 contribute to the alpha-D-glucose 1-phosphate site.

The protein belongs to the bacterial/plant glucose-1-phosphate adenylyltransferase family. Homotetramer.

The catalysed reaction is alpha-D-glucose 1-phosphate + ATP + H(+) = ADP-alpha-D-glucose + diphosphate. It functions in the pathway glycan biosynthesis; glycogen biosynthesis. Its function is as follows. Involved in the biosynthesis of ADP-glucose, a building block required for the elongation reactions to produce glycogen. Catalyzes the reaction between ATP and alpha-D-glucose 1-phosphate (G1P) to produce pyrophosphate and ADP-Glc. The protein is Glucose-1-phosphate adenylyltransferase of Cyanothece sp. (strain PCC 7425 / ATCC 29141).